A 356-amino-acid polypeptide reads, in one-letter code: Butyrate kinase (356 aa).

The protein belongs to the acetokinase family.

The protein localises to the cytoplasm. It carries out the reaction butanoate + ATP = butanoyl phosphate + ADP. It participates in lipid metabolism; butanoate metabolism. Catalyzes the conversion of butyryl-CoA through butyryl phosphate to butyrate. The sequence is that of Butyrate kinase (buk) from Clostridium perfringens (strain 13 / Type A).